A 319-amino-acid polypeptide reads, in one-letter code: Aminoimidazole riboside kinase (319 aa).

The 5-amino-1-(beta-D-ribosyl)imidazole site is built by D16, G31, and Y101. 158-160 (DVN) serves as a coordination point for ATP. R162 contacts 5-amino-1-(beta-D-ribosyl)imidazole. Residues A180, A181, and A183 each contribute to the K(+) site. 2 residues coordinate ATP: K187 and E192. G213 is a K(+) binding site. 220-225 (SLGADG) contacts ATP. 2 residues coordinate K(+): D246 and T248. A 5-amino-1-(beta-D-ribosyl)imidazole-binding site is contributed by D252. Catalysis depends on D252, which acts as the Proton acceptor. N281 provides a ligand contact to ATP. A287, A290, and G292 together coordinate K(+).

Belongs to the carbohydrate kinase PfkB family. As to quaternary structure, homodimer.

The catalysed reaction is 5-amino-1-(beta-D-ribosyl)imidazole + ATP = 5-amino-1-(5-phospho-beta-D-ribosyl)imidazole + ADP + H(+). With respect to regulation, potassium may regulate kinase activity. Functionally, phosphorylates 5-amino-1-(beta-D-ribosyl)imidazole (AIRs) to form 5-amino-1-(5-phospho-beta-D-ribosyl)imidazole (AIR), an important intermediate in the purine and thiamine biosynthetic pathways. It allows the use of exogenous aminoimidazole riboside (AIRs) to satisfy the cellular requirement for purines and thiamine. The chain is Aminoimidazole riboside kinase from Salmonella typhimurium (strain LT2 / SGSC1412 / ATCC 700720).